The following is a 121-amino-acid chain: Large ribosomal subunit protein bL20 (121 aa).

It belongs to the bacterial ribosomal protein bL20 family.

Functionally, binds directly to 23S ribosomal RNA and is necessary for the in vitro assembly process of the 50S ribosomal subunit. It is not involved in the protein synthesizing functions of that subunit. This chain is Large ribosomal subunit protein bL20, found in Koribacter versatilis (strain Ellin345).